Here is a 380-residue protein sequence, read N- to C-terminus: Queuine tRNA-ribosyltransferase (380 aa).

Asp-96 acts as the Proton acceptor in catalysis. Substrate contacts are provided by residues 96–100, Asp-150, Gln-193, and Gly-220; that span reads DSGGF. The RNA binding stretch occupies residues 251-257; sequence GVGAPDS. Residue Asp-270 is the Nucleophile of the active site. An RNA binding; important for wobble base 34 recognition region spans residues 275–279; the sequence is TRIAR. Zn(2+) contacts are provided by Cys-308, Cys-310, Cys-313, and His-339.

The protein belongs to the queuine tRNA-ribosyltransferase family. In terms of assembly, homodimer. Within each dimer, one monomer is responsible for RNA recognition and catalysis, while the other monomer binds to the replacement base PreQ1. It depends on Zn(2+) as a cofactor.

The enzyme catalyses 7-aminomethyl-7-carbaguanine + guanosine(34) in tRNA = 7-aminomethyl-7-carbaguanosine(34) in tRNA + guanine. It participates in tRNA modification; tRNA-queuosine biosynthesis. Functionally, catalyzes the base-exchange of a guanine (G) residue with the queuine precursor 7-aminomethyl-7-deazaguanine (PreQ1) at position 34 (anticodon wobble position) in tRNAs with GU(N) anticodons (tRNA-Asp, -Asn, -His and -Tyr). Catalysis occurs through a double-displacement mechanism. The nucleophile active site attacks the C1' of nucleotide 34 to detach the guanine base from the RNA, forming a covalent enzyme-RNA intermediate. The proton acceptor active site deprotonates the incoming PreQ1, allowing a nucleophilic attack on the C1' of the ribose to form the product. After dissociation, two additional enzymatic reactions on the tRNA convert PreQ1 to queuine (Q), resulting in the hypermodified nucleoside queuosine (7-(((4,5-cis-dihydroxy-2-cyclopenten-1-yl)amino)methyl)-7-deazaguanosine). This chain is Queuine tRNA-ribosyltransferase, found in Streptococcus uberis (strain ATCC BAA-854 / 0140J).